A 733-amino-acid polypeptide reads, in one-letter code: Hypermethylated in cancer 1 protein (733 aa).

Positions 47 to 110 (CDVIIVVQNA…IYTGRLADGA (64 aa)) constitute a BTB domain. The mediates HDAC-dependent transcriptional repression stretch occupies residues 154–315 (KYCHLRGGGG…PFRGGSGSPG (162 aa)). Arg159 is subject to Omega-N-methylarginine. The disordered stretch occupies residues 189-209 (YPSPVGPPPPPAAEPPSGPEA). The span at 192–206 (PVGPPPPPAAEPPSG) shows a compositional bias: pro residues. A Phosphoserine modification is found at Ser237. The segment at 241-247 (GLDLSKK) is interaction with CTBP1. Residues 241–421 (GLDLSKKSPP…PGGHLEGYPC (181 aa)) form a disordered region. Ser248 carries the phosphoserine modification. Residues 284 to 293 (LALPSLPPLP) are compositionally biased toward pro residues. An N6-acetyllysine; alternate modification is found at Lys333. Lys333 participates in a covalent cross-link: Glycyl lysine isopeptide (Lys-Gly) (interchain with G-Cter in SUMO); alternate. Basic and acidic residues predominate over residues 344-361 (ELGRERGSPSERCEERGG). Ser366 carries the phosphoserine modification. A compositionally biased stretch (pro residues) spans 368-380 (GGPPLGLAPPPRY). C2H2-type zinc fingers lie at residues 439-459 (CIPCGKGFPSSEQLNAHVEAH), 509-529 (CASCDKSYKDPATLRQHEKTH), 537-557 (CTICGKKFTQRGTMTRHMRSH), 565-585 (CDACGMRFTRQYRLTEHMRIH), and 593-613 (CQVCGGKFAQQRNLISHMKMH). Ser704 carries the phosphoserine modification.

Belongs to the krueppel C2H2-type zinc-finger protein family. Hic subfamily. As to quaternary structure, self-associates. Interacts with HIC2. Interacts with CTBP1 and CTBP2. Interacts with TCF7L2 and ARID1A. Interacts with MTA1 and MBD3; indicative for an association with the NuRD complex. Interacts with SIRT1. Post-translationally, acetylated on several residues, including Lys-333. Lys-333 is deacetylated by SIRT1. In terms of processing, sumoylated on Lys-333 by a PIAS family member, which enhances interaction with MTA1, positively regulates transcriptional repression activity and is enhanced by HDAC4. In terms of tissue distribution, ubiquitously expressed with highest levels found in lung, colon, prostate, thymus, testis and ovary. Expression is absent or decreased in many tumor cells.

Its subcellular location is the nucleus. In terms of biological role, transcriptional repressor. Recognizes and binds to the consensus sequence '5-[CG]NG[CG]GGGCA[CA]CC-3'. May act as a tumor suppressor. Involved in development of head, face, limbs and ventral body wall. Involved in down-regulation of SIRT1 and thereby is involved in regulation of p53/TP53-dependent apoptotic DNA-damage responses. The specific target gene promoter association seems to be depend on corepressors, such as CTBP1 or CTBP2 and MTA1. In cooperation with MTA1 (indicative for an association with the NuRD complex) represses transcription from CCND1/cyclin-D1 and CDKN1C/p57Kip2 specifically in quiescent cells. Involved in regulation of the Wnt signaling pathway probably by association with TCF7L2 and preventing TCF7L2 and CTNNB1 association with promoters of TCF-responsive genes. Seems to repress transcription from E2F1 and ATOH1 which involves ARID1A, indicative for the participation of a distinct SWI/SNF-type chromatin-remodeling complex. Probably represses transcription of ACKR3, FGFBP1 and EFNA1. This is Hypermethylated in cancer 1 protein (HIC1) from Homo sapiens (Human).